We begin with the raw amino-acid sequence, 239 residues long: 1-(5-phosphoribosyl)-5-[(5-phosphoribosylamino)methylideneamino] imidazole-4-carboxamide isomerase (239 aa).

Asp-8 functions as the Proton acceptor in the catalytic mechanism. The active-site Proton donor is the Asp-129.

The protein belongs to the HisA/HisF family.

The protein localises to the cytoplasm. It carries out the reaction 1-(5-phospho-beta-D-ribosyl)-5-[(5-phospho-beta-D-ribosylamino)methylideneamino]imidazole-4-carboxamide = 5-[(5-phospho-1-deoxy-D-ribulos-1-ylimino)methylamino]-1-(5-phospho-beta-D-ribosyl)imidazole-4-carboxamide. Its pathway is amino-acid biosynthesis; L-histidine biosynthesis; L-histidine from 5-phospho-alpha-D-ribose 1-diphosphate: step 4/9. The protein is 1-(5-phosphoribosyl)-5-[(5-phosphoribosylamino)methylideneamino] imidazole-4-carboxamide isomerase of Roseobacter denitrificans (strain ATCC 33942 / OCh 114) (Erythrobacter sp. (strain OCh 114)).